The primary structure comprises 220 residues: Uracil-DNA glycosylase (220 aa).

The active-site Proton acceptor is Asp65.

This sequence belongs to the uracil-DNA glycosylase (UDG) superfamily. UNG family.

The protein localises to the cytoplasm. It catalyses the reaction Hydrolyzes single-stranded DNA or mismatched double-stranded DNA and polynucleotides, releasing free uracil.. Functionally, excises uracil residues from the DNA which can arise as a result of misincorporation of dUMP residues by DNA polymerase or due to deamination of cytosine. The sequence is that of Uracil-DNA glycosylase from Bacteroides thetaiotaomicron (strain ATCC 29148 / DSM 2079 / JCM 5827 / CCUG 10774 / NCTC 10582 / VPI-5482 / E50).